Consider the following 130-residue polypeptide: UPF0146 protein AF_0739.1 (130 aa).

Belongs to the UPF0146 family.

The protein is UPF0146 protein AF_0739.1 of Archaeoglobus fulgidus (strain ATCC 49558 / DSM 4304 / JCM 9628 / NBRC 100126 / VC-16).